Here is a 143-residue protein sequence, read N- to C-terminus: FAD synthase (143 aa).

ATP-binding positions include 11 to 12 (TF), 16 to 19 (HPGH), and Asp94.

It belongs to the archaeal FAD synthase family. In terms of assembly, homodimer. It depends on a divalent metal cation as a cofactor.

The enzyme catalyses FMN + ATP + H(+) = FAD + diphosphate. It functions in the pathway cofactor biosynthesis; FAD biosynthesis; FAD from FMN: step 1/1. Catalyzes the transfer of the AMP portion of ATP to flavin mononucleotide (FMN) to produce flavin adenine dinucleotide (FAD) coenzyme. The polypeptide is FAD synthase (Halomicrobium mukohataei (strain ATCC 700874 / DSM 12286 / JCM 9738 / NCIMB 13541) (Haloarcula mukohataei)).